A 362-amino-acid polypeptide reads, in one-letter code: 3-dehydroquinate synthase (362 aa).

NAD(+) contacts are provided by residues 71–76, 105–109, 129–130, K142, and K151; these read DGEKYK, GVIGD, and TT. Residues E184, H248, and H265 each coordinate Zn(2+).

It belongs to the sugar phosphate cyclases superfamily. Dehydroquinate synthase family. The cofactor is Co(2+). It depends on Zn(2+) as a cofactor. NAD(+) is required as a cofactor.

It localises to the cytoplasm. The catalysed reaction is 7-phospho-2-dehydro-3-deoxy-D-arabino-heptonate = 3-dehydroquinate + phosphate. Its pathway is metabolic intermediate biosynthesis; chorismate biosynthesis; chorismate from D-erythrose 4-phosphate and phosphoenolpyruvate: step 2/7. Functionally, catalyzes the conversion of 3-deoxy-D-arabino-heptulosonate 7-phosphate (DAHP) to dehydroquinate (DHQ). In Hamiltonella defensa subsp. Acyrthosiphon pisum (strain 5AT), this protein is 3-dehydroquinate synthase.